The following is a 606-amino-acid chain: Ubiquitin-like modifier-activating enzyme ATG7 (606 aa).

The short motif at 316-321 (GSGTLG) is the GXGXXG motif element. The active-site Glycyl thioester intermediate is Cys-488. The tract at residues 567 to 606 (ALDDYKCVEKLSGLSKVQEEAELALEEDFDFSEDDEFVTG) is homodimerization.

This sequence belongs to the ATG7 family. In terms of assembly, homodimer. Interacts with ATG8 through a thioester bond between Cys-488 and the C-terminal Gly of ATG8 and with ATG12 through a thioester bond between Cys-488 and the C-terminal Gly of ATG12. Also interacts with ATG3.

The protein localises to the cytoplasm. It localises to the preautophagosomal structure. In terms of biological role, E1-like activating enzyme involved in the 2 ubiquitin-like systems required for cytoplasm to vacuole transport (Cvt) and autophagy. Activates ATG12 for its conjugation with ATG5 and ATG8 for its conjugation with phosphatidylethanolamine. Both systems are needed for the ATG8 association to Cvt vesicles and autophagosomes membranes. Autophagy is essential for maintenance of amino acid levels and protein synthesis under nitrogen starvation. Required for selective autophagic degradation of the nucleus (nucleophagy) as well as for mitophagy which contributes to regulate mitochondrial quantity and quality by eliminating the mitochondria to a basal level to fulfill cellular energy requirements and preventing excess ROS production. This Kluyveromyces marxianus (strain DMKU3-1042 / BCC 29191 / NBRC 104275) (Yeast) protein is Ubiquitin-like modifier-activating enzyme ATG7.